Consider the following 133-residue polypeptide: UPF0102 protein CYA_0680 (133 aa).

Belongs to the UPF0102 family.

In Synechococcus sp. (strain JA-3-3Ab) (Cyanobacteria bacterium Yellowstone A-Prime), this protein is UPF0102 protein CYA_0680.